Here is a 492-residue protein sequence, read N- to C-terminus: Ferruginol synthase (492 aa).

A helical membrane pass occupies residues 1–21 (METIALLAALFFIALTCFLTS). Topologically, residues 22–492 (GRRRNLPPGP…VPLKIIPLRP (471 aa)) are cytoplasmic. Cysteine 436 is a binding site for heme.

The protein belongs to the cytochrome P450 family. It depends on heme as a cofactor.

The protein localises to the endoplasmic reticulum membrane. The catalysed reaction is abieta-8,11,13-triene + reduced [NADPH--hemoprotein reductase] + O2 = ferruginol + oxidized [NADPH--hemoprotein reductase] + H2O + H(+). It functions in the pathway secondary metabolite biosynthesis; terpenoid biosynthesis. In terms of biological role, cytochrome P450 enzyme (CYP) which catalyzes a unique two-electron oxidation cascade on abieta-8,11,13-triene to produce ferruginol, an intermediate in tanshinone biosynthesis. This Isodon rubescens (Rabdosia rubescens) protein is Ferruginol synthase.